The following is a 472-amino-acid chain: ATP synthase subunit beta (472 aa).

149-156 (GGAGVGKT) serves as a coordination point for ATP.

This sequence belongs to the ATPase alpha/beta chains family. As to quaternary structure, F-type ATPases have 2 components, CF(1) - the catalytic core - and CF(0) - the membrane proton channel. CF(1) has five subunits: alpha(3), beta(3), gamma(1), delta(1), epsilon(1). CF(0) has three main subunits: a(1), b(2) and c(9-12). The alpha and beta chains form an alternating ring which encloses part of the gamma chain. CF(1) is attached to CF(0) by a central stalk formed by the gamma and epsilon chains, while a peripheral stalk is formed by the delta and b chains.

The protein localises to the cell inner membrane. The enzyme catalyses ATP + H2O + 4 H(+)(in) = ADP + phosphate + 5 H(+)(out). Its function is as follows. Produces ATP from ADP in the presence of a proton gradient across the membrane. The catalytic sites are hosted primarily by the beta subunits. In Pelagibacter ubique (strain HTCC1062), this protein is ATP synthase subunit beta.